We begin with the raw amino-acid sequence, 152 residues long: uncharacterized protein (152 aa).

An N-terminal signal peptide occupies residues 1–24; that stretch reads MRKMLAYTLYIVTYLTYIMNEVEC.

This is an uncharacterized protein from Acheta domesticus (House cricket).